The sequence spans 137 residues: Small ribosomal subunit protein uS12 (137 aa).

The tract at residues 1-25 (MPTINQLVRQGRKSKTYKSDSPALS) is disordered. Asp102 is modified (3-methylthioaspartic acid).

It belongs to the universal ribosomal protein uS12 family. Part of the 30S ribosomal subunit. Contacts proteins S8 and S17. May interact with IF1 in the 30S initiation complex.

Functionally, with S4 and S5 plays an important role in translational accuracy. In terms of biological role, interacts with and stabilizes bases of the 16S rRNA that are involved in tRNA selection in the A site and with the mRNA backbone. Located at the interface of the 30S and 50S subunits, it traverses the body of the 30S subunit contacting proteins on the other side and probably holding the rRNA structure together. The combined cluster of proteins S8, S12 and S17 appears to hold together the shoulder and platform of the 30S subunit. The sequence is that of Small ribosomal subunit protein uS12 from Finegoldia magna (strain ATCC 29328 / DSM 20472 / WAL 2508) (Peptostreptococcus magnus).